A 1578-amino-acid chain; its full sequence is Pentafunctional AROM polypeptide (1578 aa).

Positions 1-384 (MTGPTKISIL…YEPRASVVPN (384 aa)) are 3-dehydroquinate synthase. NAD(+) contacts are provided by residues 44 to 46 (DTN), 81 to 84 (EVSK), 114 to 116 (GGV), and aspartate 119. Residue arginine 130 coordinates 7-phospho-2-dehydro-3-deoxy-D-arabino-heptonate. Residue 139-140 (TT) coordinates NAD(+). Residues aspartate 146 and lysine 152 each coordinate 7-phospho-2-dehydro-3-deoxy-D-arabino-heptonate. NAD(+) is bound at residue lysine 161. Residue asparagine 162 participates in 7-phospho-2-dehydro-3-deoxy-D-arabino-heptonate binding. Residues 179 to 182 (FLET) and asparagine 190 contribute to the NAD(+) site. Glutamate 194 contacts Zn(2+). Residues 194 to 197 (EVIK) and lysine 250 contribute to the 7-phospho-2-dehydro-3-deoxy-D-arabino-heptonate site. The active-site Proton acceptor; for 3-dehydroquinate synthase activity is glutamate 260. Residues 264–268 (RNLLN) and histidine 271 contribute to the 7-phospho-2-dehydro-3-deoxy-D-arabino-heptonate site. Residue histidine 271 coordinates Zn(2+). Residue histidine 275 is the Proton acceptor; for 3-dehydroquinate synthase activity of the active site. 7-phospho-2-dehydro-3-deoxy-D-arabino-heptonate-binding residues include histidine 287 and lysine 356. Histidine 287 serves as a coordination point for Zn(2+). The EPSP synthase stretch occupies residues 397-842 (VYPGVSPASE…WDTLRQKFAV (446 aa)). Cysteine 824 functions as the For EPSP synthase activity in the catalytic mechanism. Residues 864 to 1055 (SASVFIIGMR…KKKQHSFFVS (192 aa)) are shikimate kinase. 871 to 878 (GMRGAGKT) is an ATP binding site. The interval 1056-1276 (LTLPDVRGAD…AAPGQLSATD (221 aa)) is 3-dehydroquinase. Histidine 1179 serves as the catalytic Proton acceptor; for 3-dehydroquinate dehydratase activity. Lysine 1207 functions as the Schiff-base intermediate with substrate; for 3-dehydroquinate dehydratase activity in the catalytic mechanism. A shikimate dehydrogenase region spans residues 1289–1578 (KKRFALFGSP…YERARAIVLG (290 aa)).

The protein in the N-terminal section; belongs to the sugar phosphate cyclases superfamily. Dehydroquinate synthase family. This sequence in the 2nd section; belongs to the EPSP synthase family. In the 3rd section; belongs to the shikimate kinase family. It in the 4th section; belongs to the type-I 3-dehydroquinase family. The protein in the C-terminal section; belongs to the shikimate dehydrogenase family. As to quaternary structure, homodimer. The cofactor is Zn(2+).

The protein localises to the cytoplasm. It catalyses the reaction 7-phospho-2-dehydro-3-deoxy-D-arabino-heptonate = 3-dehydroquinate + phosphate. It carries out the reaction 3-dehydroquinate = 3-dehydroshikimate + H2O. The enzyme catalyses shikimate + NADP(+) = 3-dehydroshikimate + NADPH + H(+). The catalysed reaction is shikimate + ATP = 3-phosphoshikimate + ADP + H(+). It catalyses the reaction 3-phosphoshikimate + phosphoenolpyruvate = 5-O-(1-carboxyvinyl)-3-phosphoshikimate + phosphate. The protein operates within metabolic intermediate biosynthesis; chorismate biosynthesis; chorismate from D-erythrose 4-phosphate and phosphoenolpyruvate: step 2/7. It functions in the pathway metabolic intermediate biosynthesis; chorismate biosynthesis; chorismate from D-erythrose 4-phosphate and phosphoenolpyruvate: step 3/7. Its pathway is metabolic intermediate biosynthesis; chorismate biosynthesis; chorismate from D-erythrose 4-phosphate and phosphoenolpyruvate: step 4/7. It participates in metabolic intermediate biosynthesis; chorismate biosynthesis; chorismate from D-erythrose 4-phosphate and phosphoenolpyruvate: step 5/7. The protein operates within metabolic intermediate biosynthesis; chorismate biosynthesis; chorismate from D-erythrose 4-phosphate and phosphoenolpyruvate: step 6/7. The AROM polypeptide catalyzes 5 consecutive enzymatic reactions in prechorismate polyaromatic amino acid biosynthesis. The protein is Pentafunctional AROM polypeptide of Neosartorya fischeri (strain ATCC 1020 / DSM 3700 / CBS 544.65 / FGSC A1164 / JCM 1740 / NRRL 181 / WB 181) (Aspergillus fischerianus).